The following is a 161-amino-acid chain: Putative sporulation sigma factor-processing peptidase (161 aa).

Residue Asp-38 is part of the active site.

Belongs to the peptidase U4 family.

Functionally, probably activates the RNA polymerase sigma-35 factor at the stage II of sporulation. The chain is Putative sporulation sigma factor-processing peptidase from Bacillus thuringiensis subsp. kurstaki.